A 199-amino-acid polypeptide reads, in one-letter code: Putative peroxiredoxin ycf42 (199 aa).

The 158-residue stretch at 8–165 (LQVGQIAPDF…TLRVLQAIQY (158 aa)) folds into the Thioredoxin domain. Cysteine 53 serves as the catalytic Cysteine sulfenic acid (-SOH) intermediate.

This sequence belongs to the peroxiredoxin family. AhpC/Prx1 subfamily. In terms of assembly, homodimer; disulfide-linked, upon oxidation. Post-translationally, the Cys-53-SH group is the primary site of oxidation by H(2)O(2), and the oxidized Cys-53 (probably Cys-SOH) rapidly reacts with Cys-174-SH of the other subunit to form an intermolecular disulfide. This disulfide is subsequently reduced by thioredoxin.

It localises to the plastid. Its subcellular location is the chloroplast. It catalyses the reaction a hydroperoxide + [thioredoxin]-dithiol = an alcohol + [thioredoxin]-disulfide + H2O. In terms of biological role, thiol-specific peroxidase that catalyzes the reduction of hydrogen peroxide and organic hydroperoxides to water and alcohols, respectively. Plays a role in cell protection against oxidative stress by detoxifying peroxides. This is Putative peroxiredoxin ycf42 (ycf42) from Porphyra purpurea (Red seaweed).